Here is a 163-residue protein sequence, read N- to C-terminus: Probable chemoreceptor glutamine deamidase CheD (163 aa).

This sequence belongs to the CheD family.

The enzyme catalyses L-glutaminyl-[protein] + H2O = L-glutamyl-[protein] + NH4(+). In terms of biological role, probably deamidates glutamine residues to glutamate on methyl-accepting chemotaxis receptors (MCPs), playing an important role in chemotaxis. The sequence is that of Probable chemoreceptor glutamine deamidase CheD from Borrelia turicatae (strain 91E135).